A 351-amino-acid chain; its full sequence is Signal recognition particle receptor FtsY (351 aa).

GTP-binding positions include 152 to 159, 235 to 239, and 299 to 302; these read GVNGSGKT, DTAGR, and TKMD.

Belongs to the GTP-binding SRP family. FtsY subfamily. In terms of assembly, part of the signal recognition particle protein translocation system, which is composed of SRP and FtsY.

It is found in the cell membrane. The protein localises to the cytoplasm. It carries out the reaction GTP + H2O = GDP + phosphate + H(+). Functionally, involved in targeting and insertion of nascent membrane proteins into the cytoplasmic membrane. Acts as a receptor for the complex formed by the signal recognition particle (SRP) and the ribosome-nascent chain (RNC). The chain is Signal recognition particle receptor FtsY from Metamycoplasma hominis (strain ATCC 23114 / DSM 25592 / NBRC 14850 / NCTC 10111 / PG21) (Mycoplasma hominis).